A 279-amino-acid polypeptide reads, in one-letter code: Putative F-box protein At1g50880 (279 aa).

An F-box domain is found at 19–69 (SSSMSSIPLDVTSKILAKLPAKSVLRARCVSKQWSSISTDPYFISNMFPKQ).

This chain is Putative F-box protein At1g50880, found in Arabidopsis thaliana (Mouse-ear cress).